Here is a 595-residue protein sequence, read N- to C-terminus: Mitoguardin 1 (595 aa).

2 helical membrane passes run 11–31 (LPIK…YYSL) and 38–58 (TGTK…IIIA).

This sequence belongs to the mitoguardin family. As to quaternary structure, homodimer and heterodimer; forms heterodimers with miga2.

The protein localises to the mitochondrion outer membrane. Its function is as follows. Regulator of mitochondrial fusion: acts by forming homo- and heterodimers at the mitochondrial outer membrane and facilitating the formation of pld6/MitoPLD dimers. May act by regulating phospholipid metabolism via pld6/MitoPLD. In Danio rerio (Zebrafish), this protein is Mitoguardin 1.